Reading from the N-terminus, the 120-residue chain is MLRFTDEHEWLRLDGDVATVGITAHAAEQLGDLVFVELPKVGAKLTKGEAAAVVESVKAASDVYAPLSGEVTEVNEAAVADPASVGTDPQGGGWLYRLKLDDPSAMDELMDEAAYAAFAK.

Residues 17 to 99 (VATVGITAHA…QGGGWLYRLK (83 aa)) form the Lipoyl-binding domain. Residue lysine 58 is modified to N6-lipoyllysine.

This sequence belongs to the GcvH family. The glycine cleavage system is composed of four proteins: P, T, L and H. (R)-lipoate is required as a cofactor.

In terms of biological role, the glycine cleavage system catalyzes the degradation of glycine. The H protein shuttles the methylamine group of glycine from the P protein to the T protein. This Methylorubrum extorquens (strain CM4 / NCIMB 13688) (Methylobacterium extorquens) protein is Glycine cleavage system H protein.